A 609-amino-acid chain; its full sequence is Isocitrate dehydrogenase kinase/phosphatase (609 aa).

Residues 325-331 (APGIKGM) and Lys346 contribute to the ATP site. Asp381 is a catalytic residue.

This sequence belongs to the AceK family.

It is found in the cytoplasm. The catalysed reaction is L-seryl-[isocitrate dehydrogenase] + ATP = O-phospho-L-seryl-[isocitrate dehydrogenase] + ADP + H(+). Its function is as follows. Bifunctional enzyme which can phosphorylate or dephosphorylate isocitrate dehydrogenase (IDH) on a specific serine residue. This is a regulatory mechanism which enables bacteria to bypass the Krebs cycle via the glyoxylate shunt in response to the source of carbon. When bacteria are grown on glucose, IDH is fully active and unphosphorylated, but when grown on acetate or ethanol, the activity of IDH declines drastically concomitant with its phosphorylation. The sequence is that of Isocitrate dehydrogenase kinase/phosphatase from Acidovorax sp. (strain JS42).